Here is a 245-residue protein sequence, read N- to C-terminus: uncharacterized protein (245 aa).

The next 2 helical transmembrane spans lie at 29 to 51 (LVVL…RIGM) and 61 to 83 (TILF…LMLH).

It localises to the cell membrane. This is an uncharacterized protein from Treponema pallidum (strain Nichols).